The primary structure comprises 180 residues: Cell division protein ZapC (180 aa).

The protein belongs to the ZapC family. In terms of assembly, interacts directly with FtsZ.

It localises to the cytoplasm. Its function is as follows. Contributes to the efficiency of the cell division process by stabilizing the polymeric form of the cell division protein FtsZ. Acts by promoting interactions between FtsZ protofilaments and suppressing the GTPase activity of FtsZ. The protein is Cell division protein ZapC of Vibrio vulnificus (strain CMCP6).